Here is a 355-residue protein sequence, read N- to C-terminus: UDP-N-acetylglucosamine--N-acetylmuramyl-(pentapeptide) pyrophosphoryl-undecaprenol N-acetylglucosamine transferase (355 aa).

UDP-N-acetyl-alpha-D-glucosamine-binding positions include Thr15–Gly17, Asn127, Arg163, Ser191, Ile244, Ala263–Glu268, and Gln288.

Belongs to the glycosyltransferase 28 family. MurG subfamily.

It is found in the cell inner membrane. It carries out the reaction di-trans,octa-cis-undecaprenyl diphospho-N-acetyl-alpha-D-muramoyl-L-alanyl-D-glutamyl-meso-2,6-diaminopimeloyl-D-alanyl-D-alanine + UDP-N-acetyl-alpha-D-glucosamine = di-trans,octa-cis-undecaprenyl diphospho-[N-acetyl-alpha-D-glucosaminyl-(1-&gt;4)]-N-acetyl-alpha-D-muramoyl-L-alanyl-D-glutamyl-meso-2,6-diaminopimeloyl-D-alanyl-D-alanine + UDP + H(+). Its pathway is cell wall biogenesis; peptidoglycan biosynthesis. In terms of biological role, cell wall formation. Catalyzes the transfer of a GlcNAc subunit on undecaprenyl-pyrophosphoryl-MurNAc-pentapeptide (lipid intermediate I) to form undecaprenyl-pyrophosphoryl-MurNAc-(pentapeptide)GlcNAc (lipid intermediate II). The protein is UDP-N-acetylglucosamine--N-acetylmuramyl-(pentapeptide) pyrophosphoryl-undecaprenol N-acetylglucosamine transferase of Escherichia coli (strain K12 / MC4100 / BW2952).